A 153-amino-acid polypeptide reads, in one-letter code: MAPKAEKKPAAKKPAEEEPAAEKAEKALAGKKPKAEKRLPAGKAEKSSGEGKKAGRKKAKKSVETYKIYIFKVLKQVHPDIGISSKAMSIMNSFINDIFEKLAGESAKLARYNKKPTITSREIQTSVRLVLPGELAKHAVSEGTKAVTKFTSA.

Basic and acidic residues-rich tracts occupy residues 1–28 and 36–53; these read MAPK…EKAL and EKRL…EGKK. The segment at 1–61 is disordered; that stretch reads MAPKAEKKPA…KKAGRKKAKK (61 aa). 2 positions are modified to N6-acetyllysine: K7 and K37. Residue K149 forms a Glycyl lysine isopeptide (Lys-Gly) (interchain with G-Cter in ubiquitin) linkage.

The protein belongs to the histone H2B family. As to quaternary structure, the nucleosome is a histone octamer containing two molecules each of H2A, H2B, H3 and H4 assembled in one H3-H4 heterotetramer and two H2A-H2B heterodimers. The octamer wraps approximately 147 bp of DNA. In terms of processing, can be acetylated to form H2BK6ac and H2BK33ac. Monoubiquitinated by BRE1 to form H2BK143ub1 and deubiquitinated by UBP26. Required for heterochromatic histone H3 di- and trimethylation at H3K4me. May give a specific tag for epigenetic transcriptional activation.

It is found in the nucleus. Its subcellular location is the chromosome. Core component of nucleosome. Nucleosomes wrap and compact DNA into chromatin, limiting DNA accessibility to the cellular machineries which require DNA as a template. Histones thereby play a central role in transcription regulation, DNA repair, DNA replication and chromosomal stability. DNA accessibility is regulated via a complex set of post-translational modifications of histones, also called histone code, and nucleosome remodeling. The chain is Histone H2B.10 (H2B.10) from Oryza sativa subsp. japonica (Rice).